We begin with the raw amino-acid sequence, 472 residues long: MATYLAPPVSSNKENSPAPNIALSDIDAISLSLRTSLSGVTLPAKKKVAALGLGRAPKFTYRRHSNKPYNRSTSITRAKKAAVQTKSVRSKAAVKKSNTRPLPLKLVQRLDVESARLERLRKAVWNPPAPVPGQVRVPLKLPYPRFPSIEYIDNEYLKEIPVQYIFDRMVPLLPSIATITLAYQPYASIPHPDSKILRDTTLAFAIPEVIDGRKPHWAAKARGREPDLALAVAYKSGEGSNGNTVVAVNSLAFATQCAYWPRLLTTSIPIPTPKRPTPSASAVSTSLPAIVETEENVSDASFSSSSSWSDSDSEVEFIDLPRLPRPVKDDKGFLHLPLVELPIPSPSTFPIIHRHLHHPSRALLPDLLGLPEHYTTRSQVLDAISGLSVQQLMDKLTTLQGVWQNLCSLGIGRLGTWRQLGEAWACVVGVIAGQGLLIAGQEEAEVQRTGRKTAAEDVAWEWVRREKAKEQQ.

Residues Asn70 and Asn296 are each glycosylated (N-linked (GlcNAc...) asparagine).

Required for developmental progression after cells of opposite mating types fuse with one another, essential for processes common to both dikaryotic filament formation and monokaryotic fruiting. A direct target for transcription factors Sxi1-alpha and Sxi2-a. The protein is Clampless protein 1 of Cryptococcus neoformans var. neoformans serotype D (strain B-3501A) (Filobasidiella neoformans).